A 120-amino-acid polypeptide reads, in one-letter code: uncharacterized protein (120 aa).

The signal sequence occupies residues 1-18 (MRSWIPLLVLFAVLAVFA). Positions 20–99 (AGKSSESDES…GDNRVKRDGL (80 aa)) are disordered.

This is an uncharacterized protein from Caenorhabditis elegans.